The primary structure comprises 395 residues: Nitrite extrusion protein (395 aa).

A run of 12 helical transmembrane segments spans residues 15–35 (SLVA…QITL), 44–64 (ISLV…PLGY), 73–93 (LMFM…SIAD), 96–116 (FDLI…SIGV), 133–153 (GIYG…PVIA), 160–180 (STVQ…VLFG), 203–223 (VLWF…AFTI), 240–262 (AGLR…GFLA), 271–291 (LMFV…SPTI), 293–313 (LYTF…GTVF), 330–350 (IVSA…ASVF), and 357–377 (AIGF…VIWM).

It belongs to the major facilitator superfamily. Nitrate/nitrite porter (TC 2.A.1.8) family.

The protein resides in the cell membrane. Functionally, involved in excretion of nitrite produced by the dissimilatory reduction of nitrate. This chain is Nitrite extrusion protein (narK), found in Bacillus subtilis (strain 168).